A 628-amino-acid polypeptide reads, in one-letter code: Kinesin-like protein tea2 (628 aa).

Positions 2–122 (SSSSSKPVNT…TTSQQTNSKG (121 aa)) are interaction with mal3. Serine 82 bears the Phosphoserine mark. Residues 132-460 (GIITSIRIRP…LKFASRAQNL (329 aa)) form the Kinesin motor domain. Position 218-225 (218-225 (GMTGTGKT)) interacts with ATP. A coiled-coil region spans residues 530–557 (LRMEELLSDHNFEIADLRDELQDKEQII). The disordered stretch occupies residues 588 to 628 (VTRGSRSSSDQFSNETKTEILPDDQQQSKKDSVTQETQLLS). The span at 589-602 (TRGSRSSSDQFSNE) shows a compositional bias: polar residues. A compositionally biased stretch (basic and acidic residues) spans 603–620 (TKTEILPDDQQQSKKDSV).

Belongs to the TRAFAC class myosin-kinesin ATPase superfamily. Kinesin family. Interacts with mal3 and tip1.

It localises to the cytoplasm. Its subcellular location is the cytoskeleton. Promotes microtubule growth, possibly through interactions with the microtubule end, and is important for establishing and maintaining polarized growth along the long axis of the cell. Acts as a kinesin motor protein that moves along microtubules and is required for proper localization of tea1 and tip1 to the cell tips and microtubules, respectively. ATPase activity stimulated via interaction with mal3. In Schizosaccharomyces pombe (strain 972 / ATCC 24843) (Fission yeast), this protein is Kinesin-like protein tea2.